Consider the following 175-residue polypeptide: Peptide deformylase (175 aa).

Positions 96 and 138 each coordinate Fe cation. Residue glutamate 139 is part of the active site. Histidine 142 serves as a coordination point for Fe cation.

Belongs to the polypeptide deformylase family. Fe(2+) serves as cofactor.

It carries out the reaction N-terminal N-formyl-L-methionyl-[peptide] + H2O = N-terminal L-methionyl-[peptide] + formate. In terms of biological role, removes the formyl group from the N-terminal Met of newly synthesized proteins. Requires at least a dipeptide for an efficient rate of reaction. N-terminal L-methionine is a prerequisite for activity but the enzyme has broad specificity at other positions. This chain is Peptide deformylase, found in Helicobacter acinonychis (strain Sheeba).